The chain runs to 988 residues: Voltage-gated delayed rectifier potassium channel KCNH5 (988 aa).

Residues 1 to 217 are Cytoplasmic-facing; it reads MPGGKRGLVA…LHYCAFKTTW (217 aa). Residues 12–90 form the PAS domain; it reads QNTFLENIVR…VRQTFDNYES (79 aa). Residues 91–143 form the PAC domain; that stretch reads NCFEVLLYKKNRTPVWFYMQIAPIRNEHEKVVLFLCTFKDITLFKQPIEDDST. A helical transmembrane segment spans residues 218 to 238; sequence DWVILILTFYTAIMVPYNVSF. Residues 239-243 are Extracellular-facing; the sequence is KTKQN. The helical transmembrane segment at 244–264 threads the bilayer; sequence NIAWLVLDSVVDVIFLVDIVL. Over 265–291 the chain is Cytoplasmic; it reads NFHTTFVGPGGEVISDPKLIRMNYLKT. The chain crosses the membrane as a helical span at residues 292 to 312; sequence WFVIDLLSCLPYDIINAFENV. At 313-319 the chain is on the extracellular side; sequence DEGISSL. The chain crosses the membrane as a helical; Voltage-sensor span at residues 320-340; that stretch reads FSSLKVVRLLRLGRVARKLDH. Residues 341 to 346 lie on the Cytoplasmic side of the membrane; the sequence is YLEYGA. The helical transmembrane segment at 347–367 threads the bilayer; it reads AVLVLLVCVFGLVAHWLACIW. Residues 368–419 lie on the Extracellular side of the membrane; it reads YSIGDYEVIDEVTNTIQIDSWLYQLALSIGTPYRYNTSAGIWEGGPSKDSLY. Asparagine 403 carries N-linked (GlcNAc...) asparagine glycosylation. An intramembrane region (pore-forming) is located at residues 420 to 440; the sequence is VSSLYFTMTSLTTIGFGNIAP. The Selectivity filter signature appears at 432–437; that stretch reads TIGFGN. At 441 to 446 the chain is on the extracellular side; that stretch reads TTDVEK. A helical membrane pass occupies residues 447–467; the sequence is MFSVAMMMVGSLLYATIFGNV. Topologically, residues 468–988 are cytoplasmic; sequence TTIFQQMYAN…PESDKDEIHF (521 aa). Position 550–667 (550–667) interacts with a nucleoside 3',5'-cyclic phosphate; it reads AFRLASDGCL…NSFSRNLTLT (118 aa). Positions 704–715 are calmodulin-binding; the sequence is HPVRKLFQKFKQ. The interval 717-742 is disordered; it reads KELRNQGSTQGDPERNQLQVESRSLQ. The segment covering 721–742 has biased composition (polar residues); that stretch reads NQGSTQGDPERNQLQVESRSLQ. A Glycyl lysine isopeptide (Lys-Gly) (interchain with G-Cter in ubiquitin) cross-link involves residue lysine 785. The tract at residues 838–890 is disordered; sequence GLLSEDPKSSDSENSVTKNPLRKTDSCDSGITKSDLRLDKAGEARSPLEHSPI. Residues 871–885 show a composition bias toward basic and acidic residues; that stretch reads SDLRLDKAGEARSPL. Serine 883 carries the post-translational modification Phosphoserine. Residues 909 to 948 are CAD (involved in subunit assembly); it reads TLQEVKHELKEDIQLLSCRMTALEKQVAEILKILSEKSVP. A disordered region spans residues 969 to 988; that stretch reads DIFSVSRPESPESDKDEIHF. Basic and acidic residues predominate over residues 977 to 988; it reads ESPESDKDEIHF.

This sequence belongs to the potassium channel family. H (Eag) (TC 1.A.1.20) subfamily. Kv10.2/KCNH5 sub-subfamily. Homotetramer. The potassium channel is probably composed of a homo- or heterotetrameric complex of pore-forming alpha subunits that can associate with modulating beta subunits. Heteromultimer with KCNH1/EAG. As to expression, detected in brain, skeletal muscle, heart, placenta, lung and liver, and at low levels in kidney.

It localises to the membrane. The enzyme catalyses K(+)(in) = K(+)(out). In terms of biological role, pore-forming (alpha) subunit of a voltage-gated delayed rectifier potassium channel that mediates outward-rectifying potassium currents which, on depolarization, reaches a steady-state level and do not inactivate. The kinetic is characterized by a slow activation time course and a small voltage dependence of the activation time constants, therefore, starts to open at more negative voltages. The activation kinetics depend on the prepulse potential and external divalent cation concentration. The time course of activation is biphasic with a fast and a slowly activating current component. With negative prepulses, the current activation is delayed and slowed down several fold, whereas more positive prepulses speed up activation, therefore the activation rate depends on holding potential. This Homo sapiens (Human) protein is Voltage-gated delayed rectifier potassium channel KCNH5.